Reading from the N-terminus, the 727-residue chain is Bromodomain-containing protein C631.02 (727 aa).

Disordered regions lie at residues 27–231 (AATI…PPMT) and 341–369 (TSYSRPGRRPRSMTAPKGGARTRRQAAMY). Acidic residues predominate over residues 56 to 68 (ENDDGTLDLFGDS). A compositionally biased stretch (basic and acidic residues) spans 69 to 78 (ELEKEQKGDN). A compositionally biased stretch (polar residues) spans 102 to 114 (PSSPTHPSVSNIT). Over residues 128-150 (EEEKSSESLDSHTHPPKRVRNED) the composition is skewed to basic and acidic residues. The span at 153 to 177 (LTFSKTSPVSPSSLKDGASNTVTND) shows a compositional bias: polar residues. Serine 162 carries the post-translational modification Phosphoserine. The span at 206–231 (SKEHSSPHDETVKKEENDKDQYPPMT) shows a compositional bias: basic and acidic residues. The Bromo 1 domain occupies 229–335 (PMTKEQHKYI…ATFERQLKQL (107 aa)). The Bromo 2 domain maps to 388–497 (RKDAAEMKFC…SIFQKLWANK (110 aa)). In terms of domain architecture, NET spans 570 to 650 (RSLSVDIYPP…KGDEIGAEAL (81 aa)). Residues 699–727 (IAAYNTKSLGSDDSSSEDDGESSESSDSA) form a disordered region. Acidic residues predominate over residues 712 to 727 (SSSEDDGESSESSDSA).

This sequence belongs to the BET family.

Its subcellular location is the nucleus. This is Bromodomain-containing protein C631.02 from Schizosaccharomyces pombe (strain 972 / ATCC 24843) (Fission yeast).